A 208-amino-acid chain; its full sequence is FMN-dependent NADH:quinone oxidoreductase 1 (208 aa).

17–19 (SVS) contributes to the FMN binding site.

The protein belongs to the azoreductase type 1 family. As to quaternary structure, homodimer. FMN is required as a cofactor.

It carries out the reaction 2 a quinone + NADH + H(+) = 2 a 1,4-benzosemiquinone + NAD(+). It catalyses the reaction N,N-dimethyl-1,4-phenylenediamine + anthranilate + 2 NAD(+) = 2-(4-dimethylaminophenyl)diazenylbenzoate + 2 NADH + 2 H(+). Functionally, quinone reductase that provides resistance to thiol-specific stress caused by electrophilic quinones. Also exhibits azoreductase activity. Catalyzes the reductive cleavage of the azo bond in aromatic azo compounds to the corresponding amines. This chain is FMN-dependent NADH:quinone oxidoreductase 1, found in Listeria monocytogenes serovar 1/2a (strain ATCC BAA-679 / EGD-e).